The chain runs to 75 residues: Kappa-scoloptoxin(03)-Ssm1e (75 aa).

The first 23 residues, 1–23 (MKSSMAILLVMALIIFTLDKNYS), serve as a signal peptide directing secretion.

It belongs to the scoloptoxin-03 family. Contains 3 disulfide bonds. In terms of tissue distribution, expressed by the venom gland.

The protein resides in the secreted. Its function is as follows. Inhibits voltage-gated potassium channels. The protein is Kappa-scoloptoxin(03)-Ssm1e of Scolopendra mutilans (Chinese red-headed centipede).